The primary structure comprises 658 residues: Cysteine-rich receptor-like protein kinase 14 (658 aa).

Positions 1-22 (MELKNLFPIFWFVLVGFAVVSA) are cleaved as a signal peptide. 2 consecutive Gnk2-homologous domains span residues 23 to 125 (QECG…NSSF) and 131 to 240 (AEPH…LFPF). The Extracellular portion of the chain corresponds to 23-277 (QECGKTGFFV…ATKKGSITIS (255 aa)). N-linked (GlcNAc...) asparagine glycosylation is found at N51, N60, N102, N122, and N146. A helical transmembrane segment spans residues 278 to 298 (IGIVWAIIIPTVIVVFLVLLA). Residues 299–658 (LGFVVYRRRK…DVTITDFEPR (360 aa)) are Cytoplasmic-facing. The 278-residue stretch at 337 to 614 (FSESNIIGRG…NMMLINNSYV (278 aa)) folds into the Protein kinase domain. ATP is bound by residues 343-351 (IGRGGFGEV) and K364. Y409 carries the post-translational modification Phosphotyrosine. The active-site Proton acceptor is the D461. S465 is modified (phosphoserine). T501 carries the post-translational modification Phosphothreonine. Position 509 is a phosphotyrosine (Y509).

It belongs to the protein kinase superfamily. Ser/Thr protein kinase family. CRK subfamily.

Its subcellular location is the membrane. The enzyme catalyses L-seryl-[protein] + ATP = O-phospho-L-seryl-[protein] + ADP + H(+). It catalyses the reaction L-threonyl-[protein] + ATP = O-phospho-L-threonyl-[protein] + ADP + H(+). This chain is Cysteine-rich receptor-like protein kinase 14 (CRK14), found in Arabidopsis thaliana (Mouse-ear cress).